The chain runs to 264 residues: Thymidylate synthase (264 aa).

R21 contributes to the dUMP binding site. H51 contacts (6R)-5,10-methylene-5,6,7,8-tetrahydrofolate. Position 126–127 (R126–R127) interacts with dUMP. Residue C146 is the Nucleophile of the active site. DUMP-binding positions include R166–D169, N177, and H207–Y209. D169 is a binding site for (6R)-5,10-methylene-5,6,7,8-tetrahydrofolate. A (6R)-5,10-methylene-5,6,7,8-tetrahydrofolate-binding site is contributed by A263.

This sequence belongs to the thymidylate synthase family. Bacterial-type ThyA subfamily. As to quaternary structure, homodimer.

It is found in the cytoplasm. It carries out the reaction dUMP + (6R)-5,10-methylene-5,6,7,8-tetrahydrofolate = 7,8-dihydrofolate + dTMP. It participates in pyrimidine metabolism; dTTP biosynthesis. Catalyzes the reductive methylation of 2'-deoxyuridine-5'-monophosphate (dUMP) to 2'-deoxythymidine-5'-monophosphate (dTMP) while utilizing 5,10-methylenetetrahydrofolate (mTHF) as the methyl donor and reductant in the reaction, yielding dihydrofolate (DHF) as a by-product. This enzymatic reaction provides an intracellular de novo source of dTMP, an essential precursor for DNA biosynthesis. In Bartonella henselae (strain ATCC 49882 / DSM 28221 / CCUG 30454 / Houston 1) (Rochalimaea henselae), this protein is Thymidylate synthase.